We begin with the raw amino-acid sequence, 254 residues long: Imidazole glycerol phosphate synthase subunit HisF (254 aa).

Residues Asp11 and Asp130 contribute to the active site.

Belongs to the HisA/HisF family. Heterodimer of HisH and HisF.

Its subcellular location is the cytoplasm. The enzyme catalyses 5-[(5-phospho-1-deoxy-D-ribulos-1-ylimino)methylamino]-1-(5-phospho-beta-D-ribosyl)imidazole-4-carboxamide + L-glutamine = D-erythro-1-(imidazol-4-yl)glycerol 3-phosphate + 5-amino-1-(5-phospho-beta-D-ribosyl)imidazole-4-carboxamide + L-glutamate + H(+). Its pathway is amino-acid biosynthesis; L-histidine biosynthesis; L-histidine from 5-phospho-alpha-D-ribose 1-diphosphate: step 5/9. In terms of biological role, IGPS catalyzes the conversion of PRFAR and glutamine to IGP, AICAR and glutamate. The HisF subunit catalyzes the cyclization activity that produces IGP and AICAR from PRFAR using the ammonia provided by the HisH subunit. This Staphylococcus carnosus (strain TM300) protein is Imidazole glycerol phosphate synthase subunit HisF.